The chain runs to 32 residues: Growth hormone-related protein 4 (32 aa).

The cysteines at positions 4 and 11 are disulfide-linked.

The protein belongs to the somatotropin/prolactin family. In terms of processing, glycosylated. In terms of tissue distribution, placental basal zone cells.

The protein localises to the secreted. The sequence is that of Growth hormone-related protein 4 from Rattus norvegicus (Rat).